We begin with the raw amino-acid sequence, 373 residues long: tRNA-specific 2-thiouridylase MnmA (373 aa).

Residues 12–19 (GMSGGVDS) and Met-38 contribute to the ATP site. An interaction with target base in tRNA region spans residues 98–100 (NPD). Residue Cys-103 is the Nucleophile of the active site. A disulfide bond links Cys-103 and Cys-200. An ATP-binding site is contributed by Gly-127. Residues 150–152 (KDQ) are interaction with tRNA. The Cysteine persulfide intermediate role is filled by Cys-200. The interval 312 to 313 (RY) is interaction with tRNA.

It belongs to the MnmA/TRMU family.

The protein resides in the cytoplasm. It catalyses the reaction S-sulfanyl-L-cysteinyl-[protein] + uridine(34) in tRNA + AH2 + ATP = 2-thiouridine(34) in tRNA + L-cysteinyl-[protein] + A + AMP + diphosphate + H(+). In terms of biological role, catalyzes the 2-thiolation of uridine at the wobble position (U34) of tRNA, leading to the formation of s(2)U34. The chain is tRNA-specific 2-thiouridylase MnmA from Streptococcus pyogenes serotype M6 (strain ATCC BAA-946 / MGAS10394).